Consider the following 104-residue polypeptide: Co-chaperonin GroES 1 (104 aa).

The protein belongs to the GroES chaperonin family. Heptamer of 7 subunits arranged in a ring. Interacts with the chaperonin GroEL.

It is found in the cytoplasm. Functionally, together with the chaperonin GroEL, plays an essential role in assisting protein folding. The GroEL-GroES system forms a nano-cage that allows encapsulation of the non-native substrate proteins and provides a physical environment optimized to promote and accelerate protein folding. GroES binds to the apical surface of the GroEL ring, thereby capping the opening of the GroEL channel. This chain is Co-chaperonin GroES 1, found in Mesorhizobium japonicum (strain LMG 29417 / CECT 9101 / MAFF 303099) (Mesorhizobium loti (strain MAFF 303099)).